The primary structure comprises 219 residues: N-(5'-phosphoribosyl)anthranilate isomerase (219 aa).

Belongs to the TrpF family.

It catalyses the reaction N-(5-phospho-beta-D-ribosyl)anthranilate = 1-(2-carboxyphenylamino)-1-deoxy-D-ribulose 5-phosphate. It functions in the pathway amino-acid biosynthesis; L-tryptophan biosynthesis; L-tryptophan from chorismate: step 3/5. This Bordetella avium (strain 197N) protein is N-(5'-phosphoribosyl)anthranilate isomerase.